We begin with the raw amino-acid sequence, 468 residues long: 23S rRNA (uracil(1939)-C(5))-methyltransferase RlmD (468 aa).

In terms of domain architecture, TRAM spans 12–70 (SKQLSPKLSLNVTQLDHLGAGMAQHQGKVVFIPQALPGERVSVQLTDQKKSFAKAKLIK). [4Fe-4S] cluster-binding residues include cysteine 83, cysteine 89, cysteine 92, and cysteine 174. Residues glutamine 296, phenylalanine 325, asparagine 330, glutamate 351, aspartate 378, and aspartate 398 each contribute to the S-adenosyl-L-methionine site. Cysteine 424 functions as the Nucleophile in the catalytic mechanism.

It belongs to the class I-like SAM-binding methyltransferase superfamily. RNA M5U methyltransferase family. RlmD subfamily.

It carries out the reaction uridine(1939) in 23S rRNA + S-adenosyl-L-methionine = 5-methyluridine(1939) in 23S rRNA + S-adenosyl-L-homocysteine + H(+). Its function is as follows. Catalyzes the formation of 5-methyl-uridine at position 1939 (m5U1939) in 23S rRNA. The polypeptide is 23S rRNA (uracil(1939)-C(5))-methyltransferase RlmD (Shewanella denitrificans (strain OS217 / ATCC BAA-1090 / DSM 15013)).